Consider the following 149-residue polypeptide: 3-hydroxyacyl-[acyl-carrier-protein] dehydratase FabZ (149 aa).

Histidine 53 is a catalytic residue.

This sequence belongs to the thioester dehydratase family. FabZ subfamily.

Its subcellular location is the cytoplasm. The catalysed reaction is a (3R)-hydroxyacyl-[ACP] = a (2E)-enoyl-[ACP] + H2O. Functionally, involved in unsaturated fatty acids biosynthesis. Catalyzes the dehydration of short chain beta-hydroxyacyl-ACPs and long chain saturated and unsaturated beta-hydroxyacyl-ACPs. The polypeptide is 3-hydroxyacyl-[acyl-carrier-protein] dehydratase FabZ (Polynucleobacter necessarius subsp. necessarius (strain STIR1)).